Consider the following 393-residue polypeptide: tRNA(Met) cytidine acetate ligase (393 aa).

ATP-binding residues include Gly81, Asn142, and Arg167.

Belongs to the TmcAL family.

The protein resides in the cytoplasm. It carries out the reaction cytidine(34) in elongator tRNA(Met) + acetate + ATP = N(4)-acetylcytidine(34) in elongator tRNA(Met) + AMP + diphosphate. In terms of biological role, catalyzes the formation of N(4)-acetylcytidine (ac(4)C) at the wobble position of elongator tRNA(Met), using acetate and ATP as substrates. First activates an acetate ion to form acetyladenylate (Ac-AMP) and then transfers the acetyl group to tRNA to form ac(4)C34. This chain is tRNA(Met) cytidine acetate ligase, found in Bacillus thuringiensis subsp. konkukian (strain 97-27).